Reading from the N-terminus, the 175-residue chain is Large ribosomal subunit protein uL10 (175 aa).

Belongs to the universal ribosomal protein uL10 family. In terms of assembly, part of the ribosomal stalk of the 50S ribosomal subunit. The N-terminus interacts with L11 and the large rRNA to form the base of the stalk. The C-terminus forms an elongated spine to which L12 dimers bind in a sequential fashion forming a multimeric L10(L12)X complex.

Functionally, forms part of the ribosomal stalk, playing a central role in the interaction of the ribosome with GTP-bound translation factors. The chain is Large ribosomal subunit protein uL10 from Mycolicibacterium smegmatis (strain ATCC 700084 / mc(2)155) (Mycobacterium smegmatis).